Here is a 153-residue protein sequence, read N- to C-terminus: Histone H2B.3 (153 aa).

The span at 1–28 (MAPKADKKPAAKKPAEEEPATEKAEKAP) shows a compositional bias: basic and acidic residues. Residues 1 to 60 (MAPKADKKPAAKKPAEEEPATEKAEKAPAGKKPKAEKRLPAGKSAGKEGGEGKKGKKKAK) are disordered. Residues lysine 7 and lysine 37 each carry the N6-acetyllysine modification. A Glycyl lysine isopeptide (Lys-Gly) (interchain with G-Cter in ubiquitin) cross-link involves residue lysine 149.

This sequence belongs to the histone H2B family. The nucleosome is a histone octamer containing two molecules each of H2A, H2B, H3 and H4 assembled in one H3-H4 heterotetramer and two H2A-H2B heterodimers. The octamer wraps approximately 147 bp of DNA. Can be acetylated to form H2BK6ac and H2BK33ac. In terms of processing, monoubiquitinated to form H2BK143ub1; may give a specific tag for epigenetic transcriptional activation.

The protein resides in the nucleus. It is found in the chromosome. Functionally, core component of nucleosome. Nucleosomes wrap and compact DNA into chromatin, limiting DNA accessibility to the cellular machineries which require DNA as a template. Histones thereby play a central role in transcription regulation, DNA repair, DNA replication and chromosomal stability. DNA accessibility is regulated via a complex set of post-translational modifications of histones, also called histone code, and nucleosome remodeling. The sequence is that of Histone H2B.3 from Zea mays (Maize).